A 194-amino-acid chain; its full sequence is Lysozyme g-like protein 1 (194 aa).

The signal sequence occupies residues 1-19 (MSALWLLLGLLALMDLSES). 2 disulfide bridges follow: C24/C80 and C38/C49.

It belongs to the glycosyl hydrolase 23 family.

The protein resides in the secreted. The chain is Lysozyme g-like protein 1 (LYG1) from Homo sapiens (Human).